The following is a 546-amino-acid chain: 2-isopropylmalate synthase (546 aa).

Residues 8–271 (ILIFDTTLRD…NKFFNRNSDS (264 aa)) enclose the Pyruvate carboxyltransferase domain. Mn(2+)-binding residues include Asp17, His208, His210, and Asn244. The interval 408 to 546 (QLSLVQVSCG…DKTLLSNPGK (139 aa)) is regulatory domain.

It belongs to the alpha-IPM synthase/homocitrate synthase family. LeuA type 1 subfamily. As to quaternary structure, homodimer. It depends on Mn(2+) as a cofactor.

Its subcellular location is the cytoplasm. The catalysed reaction is 3-methyl-2-oxobutanoate + acetyl-CoA + H2O = (2S)-2-isopropylmalate + CoA + H(+). It functions in the pathway amino-acid biosynthesis; L-leucine biosynthesis; L-leucine from 3-methyl-2-oxobutanoate: step 1/4. Its function is as follows. Catalyzes the condensation of the acetyl group of acetyl-CoA with 3-methyl-2-oxobutanoate (2-ketoisovalerate) to form 3-carboxy-3-hydroxy-4-methylpentanoate (2-isopropylmalate). The chain is 2-isopropylmalate synthase from Prochlorococcus marinus (strain MIT 9215).